Consider the following 106-residue polypeptide: Large ribosomal subunit protein bL21 (106 aa).

Belongs to the bacterial ribosomal protein bL21 family. As to quaternary structure, part of the 50S ribosomal subunit. Contacts protein L20.

Its function is as follows. This protein binds to 23S rRNA in the presence of protein L20. In Xylella fastidiosa (strain Temecula1 / ATCC 700964), this protein is Large ribosomal subunit protein bL21.